A 306-amino-acid polypeptide reads, in one-letter code: MSTTPPRNKFPLPLDAVVERKPAPARTAGLPAVGTPRPAAPTPAPAKPAKPRLPRTAAPAPAPVPASAVEQRASAATAGGGGMASARARAALAARLRAAGIRDERVLSAIATVPRHLFVEPGLASQAYEDAALPIGHQQTISKPSVVARMIELLREGLAADAPLERVLEIGTGCGYQAAVLSQVAREVFSIERIRPLHEQAKANLRPLRVPNLRLHYGDGMLGLPQAAPFSAIILAAAGMEVPEALLEQLAIGGRLIAPVAVMPPAGVPGQTVTQQLLLIERRNRHRFHRTALEAVFFVPLKSGTI.

The segment at 1 to 82 is disordered; that stretch reads MSTTPPRNKF…ASAATAGGGG (82 aa). Positions 38–48 are enriched in pro residues; it reads PAAPTPAPAKP. Positions 54–77 are enriched in low complexity; sequence PRTAAPAPAPVPASAVEQRASAAT. The active site involves Ser-142.

Belongs to the methyltransferase superfamily. L-isoaspartyl/D-aspartyl protein methyltransferase family.

Its subcellular location is the cytoplasm. It catalyses the reaction [protein]-L-isoaspartate + S-adenosyl-L-methionine = [protein]-L-isoaspartate alpha-methyl ester + S-adenosyl-L-homocysteine. Functionally, catalyzes the methyl esterification of L-isoaspartyl residues in peptides and proteins that result from spontaneous decomposition of normal L-aspartyl and L-asparaginyl residues. It plays a role in the repair and/or degradation of damaged proteins. This Cupriavidus necator (strain ATCC 17699 / DSM 428 / KCTC 22496 / NCIMB 10442 / H16 / Stanier 337) (Ralstonia eutropha) protein is Protein-L-isoaspartate O-methyltransferase 2.